A 204-amino-acid polypeptide reads, in one-letter code: Octanoyltransferase (204 aa).

The 178-residue stretch at 27–204 (KNTKDELWIV…LINYVSRNRH (178 aa)) folds into the BPL/LPL catalytic domain. Residues 66 to 73 (RGGQVTYH), 133 to 135 (ALG), and 146 to 148 (GLS) contribute to the substrate site. Cys-164 acts as the Acyl-thioester intermediate in catalysis.

Belongs to the LipB family.

Its subcellular location is the cytoplasm. The catalysed reaction is octanoyl-[ACP] + L-lysyl-[protein] = N(6)-octanoyl-L-lysyl-[protein] + holo-[ACP] + H(+). It participates in protein modification; protein lipoylation via endogenous pathway; protein N(6)-(lipoyl)lysine from octanoyl-[acyl-carrier-protein]: step 1/2. In terms of biological role, catalyzes the transfer of endogenously produced octanoic acid from octanoyl-acyl-carrier-protein onto the lipoyl domains of lipoate-dependent enzymes. Lipoyl-ACP can also act as a substrate although octanoyl-ACP is likely to be the physiological substrate. This is Octanoyltransferase from Vesicomyosocius okutanii subsp. Calyptogena okutanii (strain HA).